Here is a 163-residue protein sequence, read N- to C-terminus: Epididymal-specific lipocalin-6 (163 aa).

An N-terminal signal peptide occupies residues 1–20 (MGGLLLAAFLALVSVPRAQA).

This sequence belongs to the calycin superfamily. Lipocalin family. Predominantly expressed in epididymis.

The protein resides in the secreted. In terms of biological role, may play a role in male fertility. The chain is Epididymal-specific lipocalin-6 (LCN6) from Homo sapiens (Human).